Consider the following 375-residue polypeptide: Erythronate-4-phosphate dehydrogenase (375 aa).

Substrate-binding residues include S45 and T66. NAD(+)-binding positions include D146, T175, 206–208 (ASR), and D232. R208 is a catalytic residue. E237 is an active-site residue. H254 functions as the Proton donor in the catalytic mechanism. Residue G257 coordinates NAD(+). Substrate is bound at residue Y258.

Belongs to the D-isomer specific 2-hydroxyacid dehydrogenase family. PdxB subfamily. Homodimer.

The protein resides in the cytoplasm. It catalyses the reaction 4-phospho-D-erythronate + NAD(+) = (R)-3-hydroxy-2-oxo-4-phosphooxybutanoate + NADH + H(+). The protein operates within cofactor biosynthesis; pyridoxine 5'-phosphate biosynthesis; pyridoxine 5'-phosphate from D-erythrose 4-phosphate: step 2/5. Functionally, catalyzes the oxidation of erythronate-4-phosphate to 3-hydroxy-2-oxo-4-phosphonooxybutanoate. This chain is Erythronate-4-phosphate dehydrogenase, found in Photorhabdus laumondii subsp. laumondii (strain DSM 15139 / CIP 105565 / TT01) (Photorhabdus luminescens subsp. laumondii).